An 84-amino-acid polypeptide reads, in one-letter code: Cell division topological specificity factor (84 aa).

This sequence belongs to the MinE family.

In terms of biological role, prevents the cell division inhibition by proteins MinC and MinD at internal division sites while permitting inhibition at polar sites. This ensures cell division at the proper site by restricting the formation of a division septum at the midpoint of the long axis of the cell. The sequence is that of Cell division topological specificity factor from Rhodopseudomonas palustris (strain BisA53).